The following is a 240-amino-acid chain: Eukaryotic translation initiation factor 3 subunit K (240 aa).

The 181-residue stretch at 41–221 (YDKDIVLTIL…TIKTRNIDEK (181 aa)) folds into the PCI domain.

The protein belongs to the eIF-3 subunit K family. Component of the eukaryotic translation initiation factor 3 (eIF-3) complex.

Its subcellular location is the cytoplasm. Its function is as follows. Component of the eukaryotic translation initiation factor 3 (eIF-3) complex, which is involved in protein synthesis of a specialized repertoire of mRNAs and, together with other initiation factors, stimulates binding of mRNA and methionyl-tRNAi to the 40S ribosome. The eIF-3 complex specifically targets and initiates translation of a subset of mRNAs involved in cell proliferation. This Caenorhabditis briggsae protein is Eukaryotic translation initiation factor 3 subunit K.